Consider the following 142-residue polypeptide: Universal stress protein C (142 aa).

It belongs to the universal stress protein A family.

The protein localises to the cytoplasm. Functionally, required for resistance to DNA-damaging agents. This Escherichia coli O157:H7 protein is Universal stress protein C (uspC).